Here is a 398-residue protein sequence, read N- to C-terminus: Pheromone receptor transcription activator (398 aa).

Disordered stretches follow at residues Met-1–Asp-30, Thr-101–Tyr-125, and Pro-254–Pro-317. Positions Gly-20–Phe-74 constitute an MADS-box domain. Residues Ser-106–Ser-121 are compositionally biased toward low complexity. 2 stretches are compositionally biased toward polar residues: residues Thr-262–Ser-273 and Asn-282–Pro-294.

The protein localises to the nucleus. In terms of biological role, in response to mating-pheromone signaling or nitrogen starvation, it interacts with mat1-Pc. This activates the expression of one of two mating-type-specific genes sxa2 or map3, which leads to inactivation of the P-factor. May also interact with mat1-Mc. The sequence is that of Pheromone receptor transcription activator (map1) from Schizosaccharomyces pombe (strain 972 / ATCC 24843) (Fission yeast).